A 530-amino-acid polypeptide reads, in one-letter code: Arginine--tRNA ligase (530 aa).

The 'HIGH' region signature appears at 113–123; that stretch reads ANPTGPLHIGH.

The protein belongs to the class-I aminoacyl-tRNA synthetase family. As to quaternary structure, monomer.

It is found in the cytoplasm. The enzyme catalyses tRNA(Arg) + L-arginine + ATP = L-arginyl-tRNA(Arg) + AMP + diphosphate. The sequence is that of Arginine--tRNA ligase from Campylobacter jejuni subsp. doylei (strain ATCC BAA-1458 / RM4099 / 269.97).